Here is a 102-residue protein sequence, read N- to C-terminus: Flagellar hook-basal body complex protein FliE 1 (102 aa).

The protein belongs to the FliE family.

The protein localises to the bacterial flagellum basal body. This is Flagellar hook-basal body complex protein FliE 1 (fliE1) from Bradyrhizobium diazoefficiens (strain JCM 10833 / BCRC 13528 / IAM 13628 / NBRC 14792 / USDA 110).